The primary structure comprises 297 residues: UTP--glucose-1-phosphate uridylyltransferase YngB (297 aa).

Positions 1–27 are cleaved as a signal peptide; that stretch reads MRKKVRKAVIPAAGLGTRFLPATKAQP.

It belongs to the UDPGP type 2 family. In terms of assembly, homodimer.

The catalysed reaction is alpha-D-glucose 1-phosphate + UTP + H(+) = UDP-alpha-D-glucose + diphosphate. Its pathway is glycolipid metabolism; diglucosyl-diacylglycerol biosynthesis. Its function is as follows. Catalyzes the formation of UDP-glucose from glucose-1-phosphate and UTP. This is an intermediate step in the biosynthesis of diglucosyl-diacylglycerol (Glc2-DAG), i.e. the predominant glycolipid found in B.subtilis membrane, which is also used as a membrane anchor for lipoteichoic acid (LTA). YngB contributes to wall teichoic acid (WTA) glucosylation and glycolipid formation under anaerobic fermentative growth conditions. Might also enter other glycosylation pathways, leading to the decorating of other cell envelope components with glucose residues under anaerobic or other growth conditions. This Bacillus subtilis (strain 168) protein is UTP--glucose-1-phosphate uridylyltransferase YngB (yngB).